We begin with the raw amino-acid sequence, 612 residues long: Peroxisomal targeting signal receptor (612 aa).

Methionine 1 bears the N-acetylmethionine mark. A disordered region spans residues 1-24; sequence MDVGSCSVGNNPLAQLHKHTQQNK. Cysteine 6 is covalently cross-linked (Glycyl cysteine thioester (Cys-Gly) (interchain with G-Cter in ubiquitin)). The segment at 7–29 is amphipathic helix 1 (AH1); sequence SVGNNPLAQLHKHTQQNKSLQFN. Residues lysine 18 and lysine 24 each participate in a glycyl lysine isopeptide (Lys-Gly) (interchain with G-Cter in ubiquitin) cross-link. At serine 61 the chain carries Phosphoserine. A TPR 1 repeat occupies 64 to 97; that stretch reads NMANMQRFINGEPLIDDKRRMEIGPSSGRLPPFS. Positions 70–104 are amphipathic helix 2 (AH2); sequence RFINGEPLIDDKRRMEIGPSSGRLPPFSNVHSLQT. Residues 120-124 carry the WxxxF/Y motif 1 motif; it reads WSQEF. Residues 129 to 151 form a disordered region; it reads SIQNRNADTGNSEKAWQRGSTTA. The tract at residues 158 to 174 is amphipathic helix 3 (AH3); sequence PNTMMNNYAYASMNSLS. The tract at residues 182-202 is disordered; the sequence is AFMNQQQSGRSKEGVNEQEQQ. Positions 204 to 208 match the WxxxF/Y motif 2 motif; that stretch reads WTDQF. Positions 257 to 273 are amphipathic helix 4 (AH4); sequence FQEVWDSIHKDAEEVLP. TPR repeat units lie at residues 313–346, 347–380, 381–418, 419–456, 457–490, 491–524, and 525–558; these read PNAYKIGCLLMENGAKLSEAALAFEAAVKEKPDH, VDAWLRLGLVQTQNEKELNGISALEECLKLDPKN, LEAMKTLAISYINEGYDMSAFTMLDKWAETKYPEIWSR, IKQQDDKFQKEKGFTHIDMNAHITKQFLQLANNLSTID, PEIQLCLGLLFYTKDDFDKTIDCFESALRVNPND, ELMWNRLGASLANSNRSEEAIQAYHRALQLKPSF, and VRARYNLAVSSMNIGCFKEAAGYLLSVLSMHEVN.

Belongs to the peroxisomal targeting signal receptor family. In terms of assembly, interacts (via WxxxF/Y and LVxEF motifs) with PEX14; promoting translocation through the PEX13-PEX14 docking complex. Post-translationally, monoubiquitinated at Cys-6 by PEX2 during PEX5 passage through the retrotranslocation channel: monoubiquitination acts as a signal for PEX5 extraction and is required for proper export from peroxisomes and recycling. Ubiquitination at Cys-6 is UBC4-independent but requires the presence of PEX4. When PEX5 recycling is compromised, polyubiquitinated at Lys-18 and Lys-24 by PEX10 during its passage through the retrotranslocation channel, leading to its degradation. Ubiquitination at Lys-18 and Lys-24 are UBC4-dependent. Monoubiquitination at Cys-6 and polyubiquitination at Lys-18 and Lys-24 are removed by UBP15 in the cytosol, resetting PEX5 for a subsequent import cycle.

The protein localises to the cytoplasm. It localises to the cytosol. The protein resides in the peroxisome matrix. In terms of biological role, receptor that mediates peroxisomal import of proteins containing a C-terminal PTS1-type tripeptide peroxisomal targeting signal (SKL-type). Binds to cargo proteins containing a PTS1 peroxisomal targeting signal in the cytosol, and translocates them into the peroxisome matrix by passing through the PEX13-PEX14 docking complex along with cargo proteins. PEX5 receptor is then retrotranslocated into the cytosol, leading to release of bound cargo in the peroxisome matrix, and reset for a subsequent peroxisome import cycle. This chain is Peroxisomal targeting signal receptor, found in Saccharomyces cerevisiae (strain ATCC 204508 / S288c) (Baker's yeast).